The sequence spans 269 residues: 4-hydroxy-tetrahydrodipicolinate reductase (269 aa).

Residues 8–13 and Glu-34 each bind NAD(+); that span reads GAAGRM. Arg-35 serves as a coordination point for NADP(+). NAD(+) is bound by residues 98–100 and 122–125; these read GTT and APNY. The active-site Proton donor/acceptor is His-155. (S)-2,3,4,5-tetrahydrodipicolinate is bound at residue His-156. The Proton donor role is filled by Lys-159. 165-166 is a binding site for (S)-2,3,4,5-tetrahydrodipicolinate; that stretch reads GT.

This sequence belongs to the DapB family.

It localises to the cytoplasm. It carries out the reaction (S)-2,3,4,5-tetrahydrodipicolinate + NAD(+) + H2O = (2S,4S)-4-hydroxy-2,3,4,5-tetrahydrodipicolinate + NADH + H(+). It catalyses the reaction (S)-2,3,4,5-tetrahydrodipicolinate + NADP(+) + H2O = (2S,4S)-4-hydroxy-2,3,4,5-tetrahydrodipicolinate + NADPH + H(+). It participates in amino-acid biosynthesis; L-lysine biosynthesis via DAP pathway; (S)-tetrahydrodipicolinate from L-aspartate: step 4/4. In terms of biological role, catalyzes the conversion of 4-hydroxy-tetrahydrodipicolinate (HTPA) to tetrahydrodipicolinate. The sequence is that of 4-hydroxy-tetrahydrodipicolinate reductase from Vibrio campbellii (strain ATCC BAA-1116).